The following is a 136-amino-acid chain: Large ribosomal subunit protein uL16 (136 aa).

It belongs to the universal ribosomal protein uL16 family. As to quaternary structure, part of the 50S ribosomal subunit.

Functionally, binds 23S rRNA and is also seen to make contacts with the A and possibly P site tRNAs. The chain is Large ribosomal subunit protein uL16 from Ehrlichia chaffeensis (strain ATCC CRL-10679 / Arkansas).